Here is a 153-residue protein sequence, read N- to C-terminus: Melatonin receptor type 1A X2.0 (153 aa).

The Cytoplasmic portion of the chain corresponds to 1 to 12 (HSSWYNRLFSNS). Residues 13–33 (GTICYVGLVWVLALGAILPNL) traverse the membrane as a helical segment. The Extracellular portion of the chain corresponds to 34–57 (FVGSLRCDPRIFSCTFAQYVSSYY). Residues 58–78 (TIAVVIFHFFLPIGVVSYCYL) traverse the membrane as a helical segment. Residues 79 to 112 (RIWVLVLNIRHRVKPDRHLHHQTWPYNIHGFITM) are Cytoplasmic-facing. Residues 113 to 133 (FVVFVLFAVCWGPLNIIGLTV) form a helical membrane-spanning segment. Residues 134–145 (AIYPPLGDSIPQ) lie on the Extracellular side of the membrane. The helical transmembrane segment at 146–153 (WLFVASYF) threads the bilayer.

Belongs to the G-protein coupled receptor 1 family.

The protein localises to the cell membrane. High affinity receptor for melatonin. The activity of this receptor is mediated by pertussis toxin sensitive G proteins that inhibits adenylate cyclase activity. The polypeptide is Melatonin receptor type 1A X2.0 (Xenopus laevis (African clawed frog)).